A 111-amino-acid chain; its full sequence is Protein BEX3 (111 aa).

The tract at residues 1–63 is disordered; sequence MANIHQENEE…RQINDGMGGD (63 aa). Positions 68–93 are interaction with p75NTR/NGFR; sequence EIFMEEMREIRRKLRELQLRNCLRIL. Positions 68-111 are interaction with 14-3-3 epsilon; that stretch reads EIFMEEMREIRRKLRELQLRNCLRILMGELSNHHDHHDEFCLMP. The Nuclear export signal motif lies at 77-87; it reads IRRKLRELQLR. Positions 100–104 are his cluster; the sequence is HHDHH. Cysteine 108 is a binding site for Zn(2+).

Belongs to the BEX family. In terms of assembly, self-associates. Binds to the DEATH domain of p75NTR/NGFR. Interacts with 14-3-3 epsilon (YWHAE). Interacts with DIABLO/SMAC. Post-translationally, ubiquitinated. Degraded by the proteasome. Found in ovarian granulosa cells, testis, prostate and seminal vesicle tissue. High levels also detected in liver.

It localises to the nucleus. It is found in the cytoplasm. The protein localises to the cytosol. In terms of biological role, may be a signaling adapter molecule involved in NGFR/p75NTR-mediated apoptosis induced by NGF. Plays a role in zinc-triggered neuronal death. In absence of reductive stress, acts as a pseudosubstrate for the CRL2(FEM1B) complex: associates with FEM1B via zinc, thereby preventing association between FEM1B and its substrates. The polypeptide is Protein BEX3 (Homo sapiens (Human)).